A 364-amino-acid chain; its full sequence is Fructose-bisphosphate aldolase B (364 aa).

Arginine 56 and lysine 147 together coordinate substrate. Glutamate 188 (proton acceptor) is an active-site residue. Lysine 230 serves as the catalytic Schiff-base intermediate with dihydroxyacetone-P.

Belongs to the class I fructose-bisphosphate aldolase family. As to quaternary structure, homotetramer.

Its subcellular location is the cytoplasm. It localises to the cytoskeleton. It is found in the microtubule organizing center. The protein resides in the centrosome. The protein localises to the centriolar satellite. The enzyme catalyses beta-D-fructose 1,6-bisphosphate = D-glyceraldehyde 3-phosphate + dihydroxyacetone phosphate. Its pathway is carbohydrate degradation; glycolysis; D-glyceraldehyde 3-phosphate and glycerone phosphate from D-glucose: step 4/4. The sequence is that of Fructose-bisphosphate aldolase B (aldob) from Sparus aurata (Gilthead sea bream).